Consider the following 335-residue polypeptide: 34 kDa spicule matrix protein (335 aa).

Positions 1 to 17 (MKGLLLILASLVAIATG) are cleaved as a signal peptide. Residues 29–194 (SGASCYRYFN…ATAMRAFVCE (166 aa)) form the C-type lectin domain. A disulfide bridge links Cys-50 with Cys-193. The interval 199–335 (QNIPPGQQPG…QEAETDVTGS (137 aa)) is disordered. A compositionally biased stretch (gly residues) spans 207–310 (PGFGGQQPGF…GGPQRPGMGG (104 aa)). The span at 311 to 323 (QPNSPNPRFNRPR) shows a compositional bias: low complexity.

This sequence belongs to the SM50 family. As to expression, embryo spicule.

The protein localises to the secreted. Its function is as follows. Major matrix protein of the sea urchin embryo spicule which directs crystal growth in certain orientations and inhibit growth in others. The polypeptide is 34 kDa spicule matrix protein (Lytechinus pictus (Painted sea urchin)).